We begin with the raw amino-acid sequence, 471 residues long: 3-isopropylmalate dehydratase large subunit (471 aa).

Positions 347, 407, and 410 each coordinate [4Fe-4S] cluster.

It belongs to the aconitase/IPM isomerase family. LeuC type 1 subfamily. As to quaternary structure, heterodimer of LeuC and LeuD. [4Fe-4S] cluster is required as a cofactor.

The catalysed reaction is (2R,3S)-3-isopropylmalate = (2S)-2-isopropylmalate. The protein operates within amino-acid biosynthesis; L-leucine biosynthesis; L-leucine from 3-methyl-2-oxobutanoate: step 2/4. Catalyzes the isomerization between 2-isopropylmalate and 3-isopropylmalate, via the formation of 2-isopropylmaleate. In Prochlorococcus marinus (strain MIT 9211), this protein is 3-isopropylmalate dehydratase large subunit.